Consider the following 373-residue polypeptide: Phosphoserine aminotransferase (373 aa).

Arg-47 provides a ligand contact to L-glutamate. Pyridoxal 5'-phosphate is bound by residues 81-82 (AR), Trp-113, Thr-164, Asp-185, and Gln-208. An N6-(pyridoxal phosphate)lysine modification is found at Lys-209. 250 to 251 (NT) lines the pyridoxal 5'-phosphate pocket.

It belongs to the class-V pyridoxal-phosphate-dependent aminotransferase family. SerC subfamily. In terms of assembly, homodimer. The cofactor is pyridoxal 5'-phosphate.

The protein localises to the cytoplasm. The enzyme catalyses O-phospho-L-serine + 2-oxoglutarate = 3-phosphooxypyruvate + L-glutamate. It catalyses the reaction 4-(phosphooxy)-L-threonine + 2-oxoglutarate = (R)-3-hydroxy-2-oxo-4-phosphooxybutanoate + L-glutamate. It functions in the pathway amino-acid biosynthesis; L-serine biosynthesis; L-serine from 3-phospho-D-glycerate: step 2/3. Its pathway is cofactor biosynthesis; pyridoxine 5'-phosphate biosynthesis; pyridoxine 5'-phosphate from D-erythrose 4-phosphate: step 3/5. In terms of biological role, catalyzes the reversible conversion of 3-phosphohydroxypyruvate to phosphoserine and of 3-hydroxy-2-oxo-4-phosphonooxybutanoate to phosphohydroxythreonine. The sequence is that of Phosphoserine aminotransferase from Buchnera aphidicola subsp. Baizongia pistaciae (strain Bp).